The primary structure comprises 235 residues: uncharacterized protein (235 aa).

To E.coli YbeR.

This is an uncharacterized protein from Escherichia coli (strain K12).